The following is a 100-amino-acid chain: Nucleoid-associated protein ckrop_0143 (100 aa).

Belongs to the YbaB/EbfC family. As to quaternary structure, homodimer.

The protein resides in the cytoplasm. It is found in the nucleoid. Its function is as follows. Binds to DNA and alters its conformation. May be involved in regulation of gene expression, nucleoid organization and DNA protection. The protein is Nucleoid-associated protein ckrop_0143 of Corynebacterium kroppenstedtii (strain DSM 44385 / JCM 11950 / CIP 105744 / CCUG 35717).